Reading from the N-terminus, the 420-residue chain is Glutamate-1-semialdehyde 2,1-aminomutase (420 aa).

Lysine 261 bears the N6-(pyridoxal phosphate)lysine mark.

The protein belongs to the class-III pyridoxal-phosphate-dependent aminotransferase family. HemL subfamily. It depends on pyridoxal 5'-phosphate as a cofactor.

Its subcellular location is the cytoplasm. The enzyme catalyses (S)-4-amino-5-oxopentanoate = 5-aminolevulinate. It functions in the pathway porphyrin-containing compound metabolism; protoporphyrin-IX biosynthesis; 5-aminolevulinate from L-glutamyl-tRNA(Glu): step 2/2. The chain is Glutamate-1-semialdehyde 2,1-aminomutase from Thermoplasma volcanium (strain ATCC 51530 / DSM 4299 / JCM 9571 / NBRC 15438 / GSS1).